The sequence spans 241 residues: Uridylate kinase (241 aa).

Residue 15–18 (KLSG) coordinates ATP. The interval 23–28 (GAEGFG) is involved in allosteric activation by GTP. Glycine 57 is a binding site for UMP. ATP-binding residues include glycine 58 and arginine 62. UMP-binding positions include aspartate 77 and 138 to 145 (TGNPFFTT). Residues threonine 165, tyrosine 171, and aspartate 174 each coordinate ATP.

It belongs to the UMP kinase family. As to quaternary structure, homohexamer.

It is found in the cytoplasm. It carries out the reaction UMP + ATP = UDP + ADP. The protein operates within pyrimidine metabolism; CTP biosynthesis via de novo pathway; UDP from UMP (UMPK route): step 1/1. With respect to regulation, allosterically activated by GTP. Inhibited by UTP. Functionally, catalyzes the reversible phosphorylation of UMP to UDP. The chain is Uridylate kinase from Yersinia pseudotuberculosis serotype O:1b (strain IP 31758).